We begin with the raw amino-acid sequence, 89 residues long: Small ribosomal subunit protein uS15 (89 aa).

Belongs to the universal ribosomal protein uS15 family. In terms of assembly, part of the 30S ribosomal subunit. Forms a bridge to the 50S subunit in the 70S ribosome, contacting the 23S rRNA.

One of the primary rRNA binding proteins, it binds directly to 16S rRNA where it helps nucleate assembly of the platform of the 30S subunit by binding and bridging several RNA helices of the 16S rRNA. Functionally, forms an intersubunit bridge (bridge B4) with the 23S rRNA of the 50S subunit in the ribosome. This is Small ribosomal subunit protein uS15 from Vibrio parahaemolyticus serotype O3:K6 (strain RIMD 2210633).